The chain runs to 516 residues: GMP synthase [glutamine-hydrolyzing] (516 aa).

One can recognise a Glutamine amidotransferase type-1 domain in the interval 6 to 198 (KVIIVDYGSQ…LFKIAGIKAD (193 aa)). Cysteine 83 functions as the Nucleophile in the catalytic mechanism. Catalysis depends on residues histidine 172 and glutamate 174. The region spanning 199–391 (WSMSSFCERV…LGLPDFIVWR (193 aa)) is the GMPS ATP-PPase domain. ATP is bound at residue 227–233 (SGGIDST).

In terms of assembly, homodimer.

The catalysed reaction is XMP + L-glutamine + ATP + H2O = GMP + L-glutamate + AMP + diphosphate + 2 H(+). Its pathway is purine metabolism; GMP biosynthesis; GMP from XMP (L-Gln route): step 1/1. In terms of biological role, catalyzes the synthesis of GMP from XMP. The protein is GMP synthase [glutamine-hydrolyzing] of Oleidesulfovibrio alaskensis (strain ATCC BAA-1058 / DSM 17464 / G20) (Desulfovibrio alaskensis).